An 84-amino-acid chain; its full sequence is Toxin BmKaTx13 (84 aa).

A signal peptide spans 1–19; the sequence is MNYLVMISFALLLMKGVES. One can recognise an LCN-type CS-alpha/beta domain in the interval 21-83; the sequence is RDAYIAKPEN…VPIRVPGKCH (63 aa). Intrachain disulfides connect cysteine 31–cysteine 82, cysteine 35–cysteine 55, cysteine 41–cysteine 65, and cysteine 45–cysteine 67. Position 84 (arginine 84) is a propeptide, removed by a carboxypeptidase.

This sequence belongs to the long (4 C-C) scorpion toxin superfamily. Sodium channel inhibitor family. Alpha subfamily. Expressed by the venom gland.

Its subcellular location is the secreted. In terms of biological role, alpha toxins bind voltage-independently at site-3 of sodium channels (Nav) and inhibit the inactivation of the activated channels, thereby blocking neuronal transmission. This toxin is active against mammals. This Olivierus martensii (Manchurian scorpion) protein is Toxin BmKaTx13.